Consider the following 389-residue polypeptide: GTPase Obg (389 aa).

The region spanning 1–159 (MKFVDEAKIL…REVLLELMLL (159 aa)) is the Obg domain. An OBG-type G domain is found at 160 to 333 (ADVGMLGMPN…LCWDIMEFLK (174 aa)). Residues 166-173 (GMPNAGKS), 191-195 (FTTLV), 213-216 (DIPG), 283-286 (NKVD), and 314-316 (AAI) each bind GTP. Positions 173 and 193 each coordinate Mg(2+). Positions 362 to 389 (QLENPDLEDDDEDWDEEDDDGVEFIYQR) are disordered. Positions 364–383 (ENPDLEDDDEDWDEEDDDGV) are enriched in acidic residues.

It belongs to the TRAFAC class OBG-HflX-like GTPase superfamily. OBG GTPase family. As to quaternary structure, monomer. Mg(2+) serves as cofactor.

The protein localises to the cytoplasm. An essential GTPase which binds GTP, GDP and possibly (p)ppGpp with moderate affinity, with high nucleotide exchange rates and a fairly low GTP hydrolysis rate. Plays a role in control of the cell cycle, stress response, ribosome biogenesis and in those bacteria that undergo differentiation, in morphogenesis control. The protein is GTPase Obg of Proteus mirabilis (strain HI4320).